The primary structure comprises 311 residues: Pantothenate kinase (311 aa).

Gly-93 to Ser-100 lines the ATP pocket.

This sequence belongs to the prokaryotic pantothenate kinase family.

The protein resides in the cytoplasm. The catalysed reaction is (R)-pantothenate + ATP = (R)-4'-phosphopantothenate + ADP + H(+). Its pathway is cofactor biosynthesis; coenzyme A biosynthesis; CoA from (R)-pantothenate: step 1/5. The sequence is that of Pantothenate kinase (coaA) from Haemophilus influenzae (strain ATCC 51907 / DSM 11121 / KW20 / Rd).